The chain runs to 194 residues: 7-methyl-GTP pyrophosphatase (194 aa).

The active-site Proton acceptor is the Asp-69.

This sequence belongs to the Maf family. YceF subfamily. Requires a divalent metal cation as cofactor.

The protein resides in the cytoplasm. It carries out the reaction N(7)-methyl-GTP + H2O = N(7)-methyl-GMP + diphosphate + H(+). Its function is as follows. Nucleoside triphosphate pyrophosphatase that hydrolyzes 7-methyl-GTP (m(7)GTP). May have a dual role in cell division arrest and in preventing the incorporation of modified nucleotides into cellular nucleic acids. This chain is 7-methyl-GTP pyrophosphatase (yceF), found in Salmonella typhi.